The following is a 946-amino-acid chain: Bifunctional glutamine synthetase adenylyltransferase/adenylyl-removing enzyme (946 aa).

The adenylyl removase stretch occupies residues 1–440; it reads MKPLSSPLQQ…VFNELIGDDE (440 aa). The adenylyl transferase stretch occupies residues 449–946; that stretch reads SEQWRELWQD…ASWQKWLVEE (498 aa).

Belongs to the GlnE family. Requires Mg(2+) as cofactor.

It carries out the reaction [glutamine synthetase]-O(4)-(5'-adenylyl)-L-tyrosine + phosphate = [glutamine synthetase]-L-tyrosine + ADP. It catalyses the reaction [glutamine synthetase]-L-tyrosine + ATP = [glutamine synthetase]-O(4)-(5'-adenylyl)-L-tyrosine + diphosphate. Functionally, involved in the regulation of glutamine synthetase GlnA, a key enzyme in the process to assimilate ammonia. When cellular nitrogen levels are high, the C-terminal adenylyl transferase (AT) inactivates GlnA by covalent transfer of an adenylyl group from ATP to specific tyrosine residue of GlnA, thus reducing its activity. Conversely, when nitrogen levels are low, the N-terminal adenylyl removase (AR) activates GlnA by removing the adenylyl group by phosphorolysis, increasing its activity. The regulatory region of GlnE binds the signal transduction protein PII (GlnB) which indicates the nitrogen status of the cell. In Shigella sonnei (strain Ss046), this protein is Bifunctional glutamine synthetase adenylyltransferase/adenylyl-removing enzyme.